A 1054-amino-acid polypeptide reads, in one-letter code: Kinesin-like protein KIN-7G (1054 aa).

In terms of domain architecture, Kinesin motor spans 17-341; that stretch reads KIFVSVRLRP…LLFASCAKEV (325 aa). 105–112 is an ATP binding site; sequence GQTSSGKT. Coiled-coil stretches lie at residues 350 to 425 and 611 to 640; these read VMSD…IGEA and TETA…VSSV. Disordered regions lie at residues 600-648 and 740-760; these read CEPE…KEKS and ERAE…PKHI. Positions 613–631 are enriched in acidic residues; it reads TAEEKEEKEETEEKEEEEE.

Belongs to the TRAFAC class myosin-kinesin ATPase superfamily. Kinesin family. KIN-7 subfamily.

The chain is Kinesin-like protein KIN-7G from Arabidopsis thaliana (Mouse-ear cress).